The chain runs to 226 residues: MASPSRQPPLGGSGLLHGSRARSYGSLVQSSCSPVRERRLEHQLEPGDTLAGLALKYGVTMEQIKRTNRLYTNDSIFLKKTLYIPILSEPRDLFNGLDSEEENDGEEEVRPSKDEIGSSSGRRKNRGSGSGRPNGTGLPPHQETSTPSHDLSASDFLKKLDSQISLSKKAAAQKLRKGESGVPEEDTGLYPSSPRMQQRAVLGPVPLTRTSRTQTLRDQEDEIFKL.

Residues serine 23 and serine 33 each carry the phosphoserine modification. In terms of domain architecture, LysM spans 40 to 84 (LEHQLEPGDTLAGLALKYGVTMEQIKRTNRLYTNDSIFLKKTLYI). Positions 95–156 (NGLDSEEEND…PSHDLSASDF (62 aa)) are disordered. Positions 98-107 (DSEEENDGEE) are enriched in acidic residues. Phosphoserine is present on serine 99. Residues 142-151 (QETSTPSHDL) are compositionally biased toward polar residues. Phosphoserine occurs at positions 165, 180, 193, and 211. The tract at residues 170–226 (AAAQKLRKGESGVPEEDTGLYPSSPRMQQRAVLGPVPLTRTSRTQTLRDQEDEIFKL) is disordered. Positions 215 to 226 (TLRDQEDEIFKL) are enriched in basic and acidic residues.

In Mus musculus (Mouse), this protein is LysM and putative peptidoglycan-binding domain-containing protein 1 (Lysmd1).